The chain runs to 148 residues: NADPH-dependent 7-cyano-7-deazaguanine reductase (148 aa).

The Thioimide intermediate role is filled by C50. D57 (proton donor) is an active-site residue. Residues 72-74 (VES) and 91-92 (HE) contribute to the substrate site.

Belongs to the GTP cyclohydrolase I family. QueF type 1 subfamily.

The protein resides in the cytoplasm. The enzyme catalyses 7-aminomethyl-7-carbaguanine + 2 NADP(+) = 7-cyano-7-deazaguanine + 2 NADPH + 3 H(+). The protein operates within tRNA modification; tRNA-queuosine biosynthesis. Its function is as follows. Catalyzes the NADPH-dependent reduction of 7-cyano-7-deazaguanine (preQ0) to 7-aminomethyl-7-deazaguanine (preQ1). This chain is NADPH-dependent 7-cyano-7-deazaguanine reductase, found in Helicobacter acinonychis (strain Sheeba).